Consider the following 154-residue polypeptide: Transcriptional repressor NrdR (154 aa).

The segment at 3–34 (CPYCRHPDSRVVDSREADDGQLIRRRRSCPEC) is a zinc-finger region. Positions 46–136 (LAVVKRSGVT…VYRSFESLAD (91 aa)) constitute an ATP-cone domain.

The protein belongs to the NrdR family. It depends on Zn(2+) as a cofactor.

In terms of biological role, negatively regulates transcription of bacterial ribonucleotide reductase nrd genes and operons by binding to NrdR-boxes. This Salinispora arenicola (strain CNS-205) protein is Transcriptional repressor NrdR.